Here is a 178-residue protein sequence, read N- to C-terminus: Germinal center-associated signaling and motility protein (178 aa).

Position 99 is a phosphoserine (serine 99). Tyrosine 148 carries the phosphotyrosine modification.

As to quaternary structure, interacts with ACTB and MYH2; the interaction with MYH2 is increased by IL6-induced phosphorylation. Interacts (via C-terminus) with ARHGEF11 (via DH domain). Interacts with ARHGEF12. Interacts with SYK; the interaction increases after B-cell receptor stimulation, resulting in enhanced SYK autophosphorylation and activity. Post-translationally, phosphorylation on tyrosine residues can be induced by IL6. Phosphorylation is mediated by LYN. In terms of processing, targeted by the ubiquitin E3 ligase subunit FBXO10 to mediate its ubiquitination and degradation. In terms of tissue distribution, expressed in diffuse large B-cell lymphoma (DLBCL) and several germinal center (GC)-like lymphoma cell lines (at protein level). Highly expressed in normal GC lymphocytes and GC-derived malignancies. Expressed in thymus and spleen.

It localises to the cytoplasm. The protein resides in the cell membrane. In terms of biological role, involved in the negative regulation of lymphocyte motility. It mediates the migration-inhibitory effects of IL6. Serves as a positive regulator of the RhoA signaling pathway. Enhancement of RhoA activation results in inhibition of lymphocyte and lymphoma cell motility by activation of its downstream effector ROCK. Is a regulator of B-cell receptor signaling, that acts through SYK kinase activation. The chain is Germinal center-associated signaling and motility protein (GCSAM) from Homo sapiens (Human).